A 195-amino-acid polypeptide reads, in one-letter code: HTH-type transcriptional regulator BetI (195 aa).

In terms of domain architecture, HTH tetR-type spans Ser-8 to Leu-68. Positions Thr-31–Phe-50 form a DNA-binding region, H-T-H motif.

The protein operates within amine and polyamine biosynthesis; betaine biosynthesis via choline pathway [regulation]. Functionally, repressor involved in the biosynthesis of the osmoprotectant glycine betaine. It represses transcription of the choline transporter BetT and the genes of BetAB involved in the synthesis of glycine betaine. The protein is HTH-type transcriptional regulator BetI of Escherichia coli O157:H7.